A 365-amino-acid chain; its full sequence is SWR1 complex subunit 2 (365 aa).

Disordered regions lie at residues Ala-43 to Glu-83 and Pro-95 to Lys-147. Acidic residues predominate over residues Glu-48–Pro-74. Residues Ala-99–Lys-108 show a composition bias toward basic residues. The span at Gly-118 to Glu-132 shows a compositional bias: basic and acidic residues. Coiled coils occupy residues Gly-123 to Arg-150 and Gly-184 to Val-225. The span at Glu-133–Glu-144 shows a compositional bias: acidic residues. The tract at residues Arg-333–Asp-365 is disordered. A compositionally biased stretch (low complexity) spans Ser-342–Ser-354. Acidic residues predominate over residues Glu-355–Asp-365.

This sequence belongs to the VPS72/YL1 family. As to quaternary structure, component of the SWR1 chromatin-remodeling complex composed of at least ARP6/ESD1/SUF3, PIE1, SWC6, SWC2 and H2AZs (HTA8, HTA9, HTA11). Interacts directly with SWC6 and H2AZs, but not with ARP6.

Functionally, component of the SWR1 complex which mediates the ATP-dependent exchange of histone H2A for the H2A variant H2A.F/Z leading to transcriptional regulation of selected genes (e.g. FLC) by chromatin remodeling. The polypeptide is SWR1 complex subunit 2 (SWC2) (Arabidopsis thaliana (Mouse-ear cress)).